Reading from the N-terminus, the 251-residue chain is uncharacterized protein (251 aa).

Threonine 12–glycine 21 serves as a coordination point for NADP(+). Substrate is bound at residue serine 148. Tyrosine 161 functions as the Proton acceptor in the catalytic mechanism.

This sequence belongs to the short-chain dehydrogenases/reductases (SDR) family.

This is an uncharacterized protein from Bacillus subtilis (strain 168).